The sequence spans 78 residues: Large ribosomal subunit protein bL28 (78 aa).

The protein belongs to the bacterial ribosomal protein bL28 family.

This chain is Large ribosomal subunit protein bL28, found in Prochlorococcus marinus (strain MIT 9215).